Reading from the N-terminus, the 536-residue chain is UDP-glucuronosyltransferase 2A2 (536 aa).

Residues 1-15 are Cytoplasmic-facing; that stretch reads MVSIRDFTMPKKFVQ. A helical transmembrane segment spans residues 16 to 36; it reads MLVFNLTLTEVVLSGNVLIWP. At 37 to 500 the chain is on the lumenal side; that stretch reads TDGSHWLNIK…TWFQYHSLDV (464 aa). N-linked (GlcNAc...) asparagine glycosylation is found at Asn-58, Asn-322, and Asn-356. A helical membrane pass occupies residues 501 to 521; that stretch reads IGFLLVCVTTAIFLVIQCCLF. Residues 522–536 are Cytoplasmic-facing; the sequence is SCQKFGKIGKKKKRE.

This sequence belongs to the UDP-glycosyltransferase family. Mainly expressed in the nasal mucosa.

It is found in the endoplasmic reticulum membrane. The catalysed reaction is glucuronate acceptor + UDP-alpha-D-glucuronate = acceptor beta-D-glucuronoside + UDP + H(+). It carries out the reaction 17alpha-estradiol + UDP-alpha-D-glucuronate = 17alpha-estradiol 3-O-(beta-D-glucuronate) + UDP + H(+). It catalyses the reaction 17beta-estradiol + UDP-alpha-D-glucuronate = 17beta-estradiol 3-O-(beta-D-glucuronate) + UDP + H(+). The enzyme catalyses chenodeoxycholate + UDP-alpha-D-glucuronate = chenodeoxycholoyl-24-O-(beta-D-glucuronate) + UDP. The catalysed reaction is lithocholate + UDP-alpha-D-glucuronate = lithocholoyl-24-O-(beta-D-glucuronate) + UDP. It carries out the reaction deoxycholate + UDP-alpha-D-glucuronate = deoxycholoyl-24-O-(beta-D-glucuronate) + UDP. It catalyses the reaction hyocholate + UDP-alpha-D-glucuronate = hyocholoyl-24-O-(beta-D-glucuronate) + UDP. The enzyme catalyses hyodeoxycholate + UDP-alpha-D-glucuronate = hyodeoxycholate 6-O-(beta-D-glucuronate) + UDP + H(+). UDP-glucuronosyltransferase (UGT) that catalyzes phase II biotransformation reactions in which lipophilic substrates are conjugated with glucuronic acid to increase the metabolite's water solubility, thereby facilitating excretion into either the urine or bile. Essential for the elimination and detoxification of drugs, xenobiotics and endogenous compounds. Catalyzes the glucuronidation of endogenous estrogen hormone estradiol. Contributes to bile acid (BA) detoxification by catalyzing the glucuronidation of BA substrates, which are natural detergents for dietary lipids absorption. Shows a potential role in detoxification of toxic waste compounds in the amniotic fluid before birth, and air-born chemical after birth. This Homo sapiens (Human) protein is UDP-glucuronosyltransferase 2A2.